The sequence spans 283 residues: Small aggregate formation protein (283 aa).

It localises to the cytoplasm. Its function is as follows. Knockout of the gene for this protein causes small aggregate formation. May regulate the secretion or processing of a secreted factor that regulates aggregate size. This Dictyostelium discoideum (Social amoeba) protein is Small aggregate formation protein (smlA).